Consider the following 714-residue polypeptide: Polyribonucleotide nucleotidyltransferase (714 aa).

Mg(2+)-binding residues include Asp-490 and Asp-496. Residues 556-615 (PRIETMQIPTDKIREVIGSGGKVIREIVEVSGAKVDINDDGIIKIASPNGDSIKKAYDMI) form the KH domain. Positions 625 to 693 (GQVYTGKVVK…DRGKVRLSMK (69 aa)) constitute an S1 motif domain.

The protein belongs to the polyribonucleotide nucleotidyltransferase family. Mg(2+) serves as cofactor.

It localises to the cytoplasm. The catalysed reaction is RNA(n+1) + phosphate = RNA(n) + a ribonucleoside 5'-diphosphate. Its function is as follows. Involved in mRNA degradation. Catalyzes the phosphorolysis of single-stranded polyribonucleotides processively in the 3'- to 5'-direction. This Ruegeria pomeroyi (strain ATCC 700808 / DSM 15171 / DSS-3) (Silicibacter pomeroyi) protein is Polyribonucleotide nucleotidyltransferase.